Here is a 309-residue protein sequence, read N- to C-terminus: HPr kinase/phosphorylase (309 aa).

Catalysis depends on residues His138 and Lys159. 153–160 (GQSGVGKS) is an ATP binding site. Ser160 serves as a coordination point for Mg(2+). The active-site Proton acceptor; for phosphorylation activity. Proton donor; for dephosphorylation activity is Asp177. Residues 201 to 210 (LEIRGLGIIN) form an important for the catalytic mechanism of both phosphorylation and dephosphorylation region. Mg(2+) is bound at residue Glu202. Arg243 is a catalytic residue. The segment at 264–269 (PVRPGR) is important for the catalytic mechanism of dephosphorylation.

It belongs to the HPrK/P family. In terms of assembly, homohexamer. Requires Mg(2+) as cofactor.

It catalyses the reaction [HPr protein]-L-serine + ATP = [HPr protein]-O-phospho-L-serine + ADP + H(+). The catalysed reaction is [HPr protein]-O-phospho-L-serine + phosphate + H(+) = [HPr protein]-L-serine + diphosphate. Functionally, catalyzes the ATP- as well as the pyrophosphate-dependent phosphorylation of a specific serine residue in HPr, a phosphocarrier protein of the phosphoenolpyruvate-dependent sugar phosphotransferase system (PTS). HprK/P also catalyzes the pyrophosphate-producing, inorganic phosphate-dependent dephosphorylation (phosphorolysis) of seryl-phosphorylated HPr (P-Ser-HPr). The two antagonistic activities of HprK/P are regulated by several intracellular metabolites, which change their concentration in response to the absence or presence of rapidly metabolisable carbon sources (glucose, fructose, etc.) in the growth medium. Also phosphorylates/dephosphorylates the HPr-like catabolite repression protein crh on a specific serine residue. Therefore, by controlling the phosphorylation state of HPr and crh, HPrK/P is a sensor enzyme that plays a major role in the regulation of carbon metabolism and sugar transport: it mediates carbon catabolite repression (CCR), and regulates PTS-catalyzed carbohydrate uptake and inducer exclusion. In Bacillus anthracis (strain A0248), this protein is HPr kinase/phosphorylase.